Here is a 789-residue protein sequence, read N- to C-terminus: Ribosomal protein S6 kinase alpha-5 (789 aa).

The Protein kinase 1 domain occupies 39-308; that stretch reads FELLKVLGTG…ADEIKQHPFF (270 aa). ATP-binding positions include 45 to 53 and Lys71; that span reads LGTGAYGKV. Residue Asp167 is the Proton acceptor of the active site. Ser202 is subject to Phosphoserine; by autocatalysis. Residues 309–377 form the AGC-kinase C-terminal domain; sequence QNINWDDLAA…VAPSILFKRN (69 aa). Residue Ser350 is modified to Phosphoserine. Phosphoserine; by autocatalysis occurs at positions 366 and 371. The 262-residue stretch at 416-677 folds into the Protein kinase 2 domain; the sequence is DLKEKPLGEG…MSSLRYNEWL (262 aa). ATP-binding positions include 422-430 and Lys445; that span reads LGEGSFSIC. Asp534 serves as the catalytic Proton acceptor. A phosphothreonine mark is found at Thr571 and Thr690. The disordered stretch occupies residues 731 to 789; it reads AKRRKMKKTSTSTETRSSSSESSHSSSSHSHGKTTPTKTLQPTNPTDSNNPETIFQFSD. Positions 739-769 are enriched in low complexity; it reads TSTSTETRSSSSESSHSSSSHSHGKTTPTKT. Ser740, Ser742, and Ser748 each carry phosphoserine; by autocatalysis. Residues 770–789 show a composition bias toward polar residues; the sequence is LQPTNPTDSNNPETIFQFSD.

Belongs to the protein kinase superfamily. AGC Ser/Thr protein kinase family. S6 kinase subfamily. The cofactor is Mg(2+). In terms of processing, ser-366 and Thr-571 phosphorylation is required for kinase activity. Ser-366 and Ser-202 are autophosphorylated by the C-terminal kinase domain, and their phosphorylation is essential for the catalytic activity of the N-terminal kinase domain. Phosphorylated at Ser-350, Thr-571 and Thr-690 by MAP kinases. Autophosphorylated at Ser-740, Ser-742 and Ser-748 by the N-terminal kinase domain. Widely expressed with high levels in heart, brain and placenta. Less abundant in lung, kidney and liver.

The protein resides in the nucleus. The enzyme catalyses L-seryl-[protein] + ATP = O-phospho-L-seryl-[protein] + ADP + H(+). It carries out the reaction L-threonyl-[protein] + ATP = O-phospho-L-threonyl-[protein] + ADP + H(+). With respect to regulation, activated by phosphorylation at Ser-350, Thr-571 and Thr-690 by MAP kinases, and by further autophosphorylation of Ser-202, Ser-366 and Ser-371 by the activated C-terminal kinase domain. The active N-terminal kinase domain finally phosphorylates downstream substrates, as well as Ser-740, Ser-742 and Ser-748 in its own C-terminal region. Functionally, serine/threonine-protein kinase that is required for the mitogen or stress-induced phosphorylation of the transcription factors CREB1 and ATF1 and that contributes to gene activation by histone phosphorylation. Phosphorylates CREB1 and ATF1 in response to mitogenic or stress stimuli such as UV-C irradiation, epidermal growth factor (EGF) and anisomycin. Directly represses transcription via phosphorylation of 'Ser-1' of histone H2A. Phosphorylates 'Ser-10' of histone H3 in response to mitogenics, stress stimuli and EGF, which results in the transcriptional activation of several immediate early genes, including proto-oncogenes c-fos/FOS and c-jun/JUN. May also phosphorylate 'Ser-28' of histone H3. Mediates the mitogen- and stress-induced phosphorylation of high mobility group protein 1 (HMGN1/HMG14). The chain is Ribosomal protein S6 kinase alpha-5 (RPS6KA5) from Gallus gallus (Chicken).